Reading from the N-terminus, the 460-residue chain is Cyclin-A1-1 (460 aa).

Disordered regions lie at residues M1–Q52 and P95–Q126. Low complexity-rich tracts occupy residues S10–S19 and S100–S111.

It belongs to the cyclin family. Cyclin AB subfamily. In terms of assembly, interacts with FZR2/CCS52A1, FZR1/CCS52A2 and FZR3/CCS52B.

The protein is Cyclin-A1-1 (CYCA1-1) of Arabidopsis thaliana (Mouse-ear cress).